A 158-amino-acid polypeptide reads, in one-letter code: Anaerobic ribonucleoside-triphosphate reductase-activating protein (158 aa).

Cys26, Cys30, and Cys33 together coordinate [4Fe-4S] cluster. S-adenosyl-L-methionine-binding positions include 32–34 (GCY) and Gly74.

This sequence belongs to the organic radical-activating enzymes family. As to quaternary structure, forms a tetramer composed of two NrdD and two NrdG subunits. [4Fe-4S] cluster serves as cofactor.

It is found in the cytoplasm. It carries out the reaction glycyl-[protein] + reduced [flavodoxin] + S-adenosyl-L-methionine = glycin-2-yl radical-[protein] + semiquinone [flavodoxin] + 5'-deoxyadenosine + L-methionine + H(+). Functionally, activation of anaerobic ribonucleoside-triphosphate reductase under anaerobic conditions by generation of an organic free radical, using S-adenosylmethionine and reduced flavodoxin as cosubstrates to produce 5'-deoxy-adenosine. The protein is Anaerobic ribonucleoside-triphosphate reductase-activating protein (nrdG) of Pasteurella multocida (strain Pm70).